The following is a 413-amino-acid chain: Tyrosine--tRNA ligase (413 aa).

A 'HIGH' region motif is present at residues P55–H64. Positions K242–S246 match the 'KMSKS' region motif. Residue K245 participates in ATP binding. One can recognise an S4 RNA-binding domain in the interval V346–K410.

This sequence belongs to the class-I aminoacyl-tRNA synthetase family. TyrS type 2 subfamily. In terms of assembly, homodimer.

It localises to the cytoplasm. The enzyme catalyses tRNA(Tyr) + L-tyrosine + ATP = L-tyrosyl-tRNA(Tyr) + AMP + diphosphate + H(+). Functionally, catalyzes the attachment of tyrosine to tRNA(Tyr) in a two-step reaction: tyrosine is first activated by ATP to form Tyr-AMP and then transferred to the acceptor end of tRNA(Tyr). This is Tyrosine--tRNA ligase from Synechococcus sp. (strain JA-2-3B'a(2-13)) (Cyanobacteria bacterium Yellowstone B-Prime).